A 122-amino-acid chain; its full sequence is MKYRIALAVSLFALSAGSYATTLCQEKEQNILKEISYAEKHQNQNRIDGLNKALSEVRANCSDSQLRADHQKKIAKQKDEVAERQQDLAEAKQKGDADKIAKRERKLAEAQEELKKLEARDY.

Residues 1 to 20 form the signal peptide; it reads MKYRIALAVSLFALSAGSYA. The tract at residues 65–100 is disordered; it reads QLRADHQKKIAKQKDEVAERQQDLAEAKQKGDADKI. Residues 66 to 100 show a composition bias toward basic and acidic residues; the sequence is LRADHQKKIAKQKDEVAERQQDLAEAKQKGDADKI.

The protein is Protein YqjC (yqjC) of Escherichia coli (strain K12).